We begin with the raw amino-acid sequence, 842 residues long: Xyloglucanase Xgh74A (842 aa).

The first 32 residues, 1–32 (MVKKFTSKIKAAVFAAVVAATAIFGPAISSQA), serve as a signal peptide directing secretion. Catalysis depends on D70, which acts as the Nucleophile. BNR repeat units follow at residues 134-144 (RSTDRGETWEK), 185-196 (WRSTDYGVTWSK), 252-262 (YRSTDGGVTWK), and 358-368 (FRSTDGGATWK). Residue D480 is the Proton donor of the active site. BNR repeat units lie at residues 533-541 (FSYDGGRNW), 577-586 (VTTDNGNSWK), 616-626 (YISTDGGLTFT), 660-671 (WRSTDGGYTFEK), and 708-718 (FRSDDAGKTWV). The Dockerin domain occupies 771 to 841 (DKGLVGDLNG…LLQAIPELPK (71 aa)).

It belongs to the glycosyl hydrolase 74 family.

In terms of biological role, hydrolyzes the glucosidic bonds of unbranched Glc residues in tamarind seed xyloglucan, producing XXXG, XLXG, XXLG and XLLG. Has low activity on carboxymethylcellulose, lichenan,hydroxyethylcellulose and glucuronoxylan, and no activity on xylan, polygalaturonic acid, wheat arabinoxylan, rhamnogalacturan, curdlan, laminarin, galactomannan, galactan, arabinan and pachyman or amorphous cellulose. The sequence is that of Xyloglucanase Xgh74A from Acetivibrio thermocellus (Hungateiclostridium thermocellum).